The chain runs to 351 residues: DNA polymerase IV (351 aa).

Positions 4–185 (IIHVDMDCFF…LPLGKIPGVG (182 aa)) constitute a UmuC domain. Mg(2+)-binding residues include aspartate 8 and aspartate 103. The active site involves glutamate 104.

This sequence belongs to the DNA polymerase type-Y family. In terms of assembly, monomer. Mg(2+) is required as a cofactor.

It is found in the cytoplasm. The enzyme catalyses DNA(n) + a 2'-deoxyribonucleoside 5'-triphosphate = DNA(n+1) + diphosphate. Poorly processive, error-prone DNA polymerase involved in untargeted mutagenesis. Copies undamaged DNA at stalled replication forks, which arise in vivo from mismatched or misaligned primer ends. These misaligned primers can be extended by PolIV. Exhibits no 3'-5' exonuclease (proofreading) activity. May be involved in translesional synthesis, in conjunction with the beta clamp from PolIII. This Cronobacter sakazakii (strain ATCC BAA-894) (Enterobacter sakazakii) protein is DNA polymerase IV.